Reading from the N-terminus, the 173-residue chain is Coordinator of PRMT5 and differentiation stimulator (173 aa).

Met1 is subject to N-acetylmethionine. The interval 1–70 (MDPQAATGRG…EGPSSEEEGF (70 aa)) is disordered. Residues Ser64 and Ser65 each carry the phosphoserine modification.

In terms of assembly, interacts with PRMT5. Interacts with histone H4; specifically interacts with the N-terminus of histone H4 but not with histone H3. Interacts with CBFB. Found in a complex with PRMT5, RUNX1 and CBFB.

It is found in the nucleus. Its function is as follows. Histone-binding protein required for histone H4 methyltransferase activity of PRMT5. Specifically required for histone H4 'Arg-3' methylation mediated by PRMT5, but not histone H3 'Arg-8' methylation, suggesting that it modulates the substrate specificity of PRMT5. Specifically interacts with the N-terminus of histone H4 but not with histone H3, suggesting that it acts by promoting the association between histone H4 and PRMT5. Involved in CCNE1 promoter repression. Plays a role in muscle cell differentiation by modulating the recruitment of PRMT5 to the promoter of genes involved in the coordination between cell cycle exit and muscle differentiation. In Mus musculus (Mouse), this protein is Coordinator of PRMT5 and differentiation stimulator (Coprs).